Here is a 100-residue protein sequence, read N- to C-terminus: Small ribosomal subunit protein uS14c (100 aa).

It belongs to the universal ribosomal protein uS14 family. As to quaternary structure, part of the 30S ribosomal subunit.

The protein localises to the plastid. Its subcellular location is the chloroplast. Its function is as follows. Binds 16S rRNA, required for the assembly of 30S particles. The protein is Small ribosomal subunit protein uS14c of Platanus occidentalis (Sycamore).